The primary structure comprises 417 residues: Tyrosine--tRNA ligase (417 aa).

Y34 provides a ligand contact to L-tyrosine. Positions 39–48 match the 'HIGH' region motif; sequence PTAKSIHIGN. Residues Y165 and Q169 each coordinate L-tyrosine. A 'KMSKS' region motif is present at residues 227–231; it reads KFGKS. K230 contacts ATP. Positions 349-416 constitute an S4 RNA-binding domain; the sequence is TDVVELLVKD…GKKKYFLAKV (68 aa).

This sequence belongs to the class-I aminoacyl-tRNA synthetase family. TyrS type 1 subfamily. Homodimer.

It is found in the cytoplasm. The enzyme catalyses tRNA(Tyr) + L-tyrosine + ATP = L-tyrosyl-tRNA(Tyr) + AMP + diphosphate + H(+). Its function is as follows. Catalyzes the attachment of tyrosine to tRNA(Tyr) in a two-step reaction: tyrosine is first activated by ATP to form Tyr-AMP and then transferred to the acceptor end of tRNA(Tyr). In Oenococcus oeni (strain ATCC BAA-331 / PSU-1), this protein is Tyrosine--tRNA ligase.